The primary structure comprises 217 residues: Deoxyribose-phosphate aldolase (217 aa).

Catalysis depends on Asp-95, which acts as the Proton donor/acceptor. Lys-156 acts as the Schiff-base intermediate with acetaldehyde in catalysis. The active-site Proton donor/acceptor is Lys-184.

Belongs to the DeoC/FbaB aldolase family. DeoC type 1 subfamily.

The protein resides in the cytoplasm. The catalysed reaction is 2-deoxy-D-ribose 5-phosphate = D-glyceraldehyde 3-phosphate + acetaldehyde. It functions in the pathway carbohydrate degradation; 2-deoxy-D-ribose 1-phosphate degradation; D-glyceraldehyde 3-phosphate and acetaldehyde from 2-deoxy-alpha-D-ribose 1-phosphate: step 2/2. Catalyzes a reversible aldol reaction between acetaldehyde and D-glyceraldehyde 3-phosphate to generate 2-deoxy-D-ribose 5-phosphate. This is Deoxyribose-phosphate aldolase from Thermosynechococcus vestitus (strain NIES-2133 / IAM M-273 / BP-1).